We begin with the raw amino-acid sequence, 384 residues long: CDP-diacylglycerol--serine O-phosphatidyltransferase (384 aa).

It belongs to the CDP-alcohol phosphatidyltransferase class-I family.

Its subcellular location is the membrane. The enzyme catalyses a CDP-1,2-diacyl-sn-glycerol + L-serine = a 1,2-diacyl-sn-glycero-3-phospho-L-serine + CMP + H(+). Its pathway is phospholipid metabolism; phosphatidylethanolamine biosynthesis; phosphatidylethanolamine from CDP-diacylglycerol: step 1/2. This Encephalitozoon cuniculi (strain GB-M1) (Microsporidian parasite) protein is CDP-diacylglycerol--serine O-phosphatidyltransferase (PSS).